The sequence spans 500 residues: Glycerol kinase (500 aa).

Thr11 provides a ligand contact to ADP. ATP contacts are provided by Thr11, Thr12, and Ser13. A sn-glycerol 3-phosphate-binding site is contributed by Thr11. Arg15 contacts ADP. Sn-glycerol 3-phosphate-binding residues include Arg81, Glu82, Tyr133, and Asp242. Residues Arg81, Glu82, Tyr133, Asp242, and Gln243 each contribute to the glycerol site. The ADP site is built by Thr264 and Gly307. The ATP site is built by Thr264, Gly307, Gln311, and Gly411. Gly411 contacts ADP.

The protein belongs to the FGGY kinase family.

It carries out the reaction glycerol + ATP = sn-glycerol 3-phosphate + ADP + H(+). The protein operates within polyol metabolism; glycerol degradation via glycerol kinase pathway; sn-glycerol 3-phosphate from glycerol: step 1/1. Inhibited by fructose 1,6-bisphosphate (FBP). Its function is as follows. Key enzyme in the regulation of glycerol uptake and metabolism. Catalyzes the phosphorylation of glycerol to yield sn-glycerol 3-phosphate. This Bradyrhizobium diazoefficiens (strain JCM 10833 / BCRC 13528 / IAM 13628 / NBRC 14792 / USDA 110) protein is Glycerol kinase.